The sequence spans 393 residues: Protein TsgA (393 aa).

Residues 1–10 (MTNSNRIKLT) lie on the Cytoplasmic side of the membrane. Residues 11–31 (WISFLSYALTGALVIVTGMVM) form a helical membrane-spanning segment. Topologically, residues 32–50 (GNIADYFHLPVSSMSNTFT) are periplasmic. Residues 51–71 (FLNAGILISIFLNAWLMEIVP) traverse the membrane as a helical segment. Residues 72–77 (LKTQLR) are Cytoplasmic-facing. The helical transmembrane segment at 78–98 (FGFILMVLAVAGLMFSHSLAL) threads the bilayer. Residues 99-100 (FS) are Periplasmic-facing. The chain crosses the membrane as a helical span at residues 101–121 (AAMFVLGLVSGITMSIGTFLI). The Cytoplasmic portion of the chain corresponds to 122–133 (TQLYEGRQRGSR). The helical transmembrane segment at 134-154 (LLFTDSFFSMAGMIFPMVAAF) threads the bilayer. Residues 155 to 161 (LLARSIE) lie on the Periplasmic side of the membrane. Residues 162–182 (WYWVYACIGLVYLAIFILTFG) traverse the membrane as a helical segment. The Cytoplasmic portion of the chain corresponds to 183-205 (CEFPALGKHAQHSQAPVVKEKWG). A helical membrane pass occupies residues 206 to 226 (IGVLFLAVAALCYILGQLGFI). Residues 227 to 244 (SWVPEYAKGLGMSLNDAG) lie on the Periplasmic side of the membrane. Residues 245-265 (ALVSDFWMSYMFGMWAFSFIL) traverse the membrane as a helical segment. The Cytoplasmic segment spans residues 266–272 (RFFDLQR). Residues 273-293 (ILTVLAGMAAVLMYLFITGTQ) traverse the membrane as a helical segment. The Periplasmic portion of the chain corresponds to 294–297 (AHMP). Residues 298 to 318 (WFILTLGFFSSAIYTSIITLG) traverse the membrane as a helical segment. The Cytoplasmic portion of the chain corresponds to 319 to 331 (SQQTKVASPKLVN). A helical membrane pass occupies residues 332-352 (FILTCGTIGTMLTFVVTGPIV). Topologically, residues 353 to 360 (AHSGPQAA) are periplasmic. A helical membrane pass occupies residues 361–381 (LLTANGLYAVVFVMCFALGFV). Topologically, residues 382-393 (SRHRQHSSPAAH) are cytoplasmic.

This sequence belongs to the major facilitator superfamily. TsgA family.

It localises to the cell inner membrane. This chain is Protein TsgA, found in Salmonella paratyphi A (strain ATCC 9150 / SARB42).